A 1025-amino-acid polypeptide reads, in one-letter code: Glycine dehydrogenase (decarboxylating), mitochondrial (1025 aa).

Residues 1-35 (MQLCARAWGLRLGRGAGGGHRLARGTGLSWAQRSR) constitute a mitochondrion transit peptide. The segment at 16 to 51 (AGGGHRLARGTGLSWAQRSRDSSGGGGGGGGGDRGA) is disordered. Positions 38–50 (SGGGGGGGGGDRG) are enriched in gly residues. 4 positions are modified to N6-acetyllysine: K452, K519, K653, and K669. N6-(pyridoxal phosphate)lysine is present on K759.

Belongs to the GcvP family. In terms of assembly, interacts with GCSH. Homodimer. The glycine cleavage system is composed of four proteins: P (GLDC), T (GCST), L (DLD) and H (GCSH). It depends on pyridoxal 5'-phosphate as a cofactor.

The protein localises to the mitochondrion. The enzyme catalyses N(6)-[(R)-lipoyl]-L-lysyl-[glycine-cleavage complex H protein] + glycine + H(+) = N(6)-[(R)-S(8)-aminomethyldihydrolipoyl]-L-lysyl-[glycine-cleavage complex H protein] + CO2. Stimulated by lipoic acid. Inhibited in presence of methylamine. Functionally, the glycine cleavage system catalyzes the degradation of glycine. The P protein (GLDC) binds the alpha-amino group of glycine through its pyridoxal phosphate cofactor; CO(2) is released and the remaining methylamine moiety is then transferred to the lipoamide cofactor of the H protein (GCSH). This chain is Glycine dehydrogenase (decarboxylating), mitochondrial, found in Mus musculus (Mouse).